Here is a 251-residue protein sequence, read N- to C-terminus: Short chain dehydrogenase gsfK (251 aa).

Residues Leu14, Thr33, Glu60, Asn88, and Lys122 each contribute to the NADP(+) site. Catalysis depends on proton donor residues Ser143 and Tyr161. NADP(+) contacts are provided by Tyr161, Lys165, Val192, and Thr194. Lys165 acts as the Lowers pKa of active site Tyr in catalysis.

Belongs to the short-chain dehydrogenases/reductases (SDR) family.

It functions in the pathway secondary metabolite biosynthesis; terpenoid biosynthesis. Short chain dehydrogenase; part of the gene cluster that mediates the biosynthesis of griseofulvin, an important antifungal drug that has been in use for a long time for treating dermatophyte infections. The first step of the pathway is the formation of the heptaketide backbone by gsfA which is initiated by priming with acetyl-CoA, followed by sequential condensations of 6 malonyl-CoA units. The resulting benzophenone can undergo a spontaneous dehydration to form norlichexanthone. However, the true precursor for the griseofulvin biosynthesis is not norlichexanthone, but the heptaketide benzophenone that is O-methylated at 3-OH by gsfB to produce griseophenone D which is further methylated at 9-OH by gsfC to yield griseophenone C. Griseophenone C is then substrate of halogenase gsfI which is responsible for the regio-specific chlorination at the C13 position to form griseophenone B. The cytochrome P450 gsfF catalyzes the coupling of orcinol and phloroglucinol rings in griseophenone B to form desmethyl-dehydrogriseofulvin A which is further methylated at 5-OH by gsfD to yield dehydrogriseofulvin. Finally, gsfE performs stereospecific reduction of enone 18 of dehydrogriseofulvin to afford the final product griseofulvin. The exact role of gsfK within the pathway has not been identified yet. The chain is Short chain dehydrogenase gsfK from Penicillium aethiopicum.